Consider the following 94-residue polypeptide: CRISPR-associated endoribonuclease Cas2 1 (94 aa).

Mg(2+) is bound at residue D8.

Belongs to the CRISPR-associated endoribonuclease Cas2 protein family. Homodimer, forms a heterotetramer with a Cas1 homodimer. The cofactor is Mg(2+).

Its function is as follows. CRISPR (clustered regularly interspaced short palindromic repeat), is an adaptive immune system that provides protection against mobile genetic elements (viruses, transposable elements and conjugative plasmids). CRISPR clusters contain sequences complementary to antecedent mobile elements and target invading nucleic acids. CRISPR clusters are transcribed and processed into CRISPR RNA (crRNA). Involved in the integration of spacer DNA into the CRISPR cassette. Functions as a ssRNA-specific endoribonuclease. This is CRISPR-associated endoribonuclease Cas2 1 (cas21) from Archaeoglobus fulgidus (strain ATCC 49558 / DSM 4304 / JCM 9628 / NBRC 100126 / VC-16).